A 137-amino-acid polypeptide reads, in one-letter code: Large ribosomal subunit protein uL14 (137 aa).

The protein belongs to the universal ribosomal protein uL14 family. As to quaternary structure, part of the 50S ribosomal subunit. Forms a cluster with proteins L3 and L24e, part of which may contact the 16S rRNA in 2 intersubunit bridges.

Its function is as follows. Binds to 23S rRNA. Forms part of two intersubunit bridges in the 70S ribosome. This Ignicoccus hospitalis (strain KIN4/I / DSM 18386 / JCM 14125) protein is Large ribosomal subunit protein uL14.